Here is a 260-residue protein sequence, read N- to C-terminus: Pyridoxine 5'-phosphate synthase (260 aa).

Asn6 provides a ligand contact to 3-amino-2-oxopropyl phosphate. 8–9 lines the 1-deoxy-D-xylulose 5-phosphate pocket; sequence DH. Residue Arg17 participates in 3-amino-2-oxopropyl phosphate binding. His42 (proton acceptor) is an active-site residue. Arg44 and His49 together coordinate 1-deoxy-D-xylulose 5-phosphate. The active-site Proton acceptor is the Glu69. Thr99 provides a ligand contact to 1-deoxy-D-xylulose 5-phosphate. His213 serves as the catalytic Proton donor. Residues Gly214 and 235 to 236 each bind 3-amino-2-oxopropyl phosphate; that span reads GQ.

It belongs to the PNP synthase family. As to quaternary structure, homooctamer; tetramer of dimers.

It is found in the cytoplasm. The enzyme catalyses 3-amino-2-oxopropyl phosphate + 1-deoxy-D-xylulose 5-phosphate = pyridoxine 5'-phosphate + phosphate + 2 H2O + H(+). It functions in the pathway cofactor biosynthesis; pyridoxine 5'-phosphate biosynthesis; pyridoxine 5'-phosphate from D-erythrose 4-phosphate: step 5/5. Functionally, catalyzes the complicated ring closure reaction between the two acyclic compounds 1-deoxy-D-xylulose-5-phosphate (DXP) and 3-amino-2-oxopropyl phosphate (1-amino-acetone-3-phosphate or AAP) to form pyridoxine 5'-phosphate (PNP) and inorganic phosphate. In Sulfurimonas denitrificans (strain ATCC 33889 / DSM 1251) (Thiomicrospira denitrificans (strain ATCC 33889 / DSM 1251)), this protein is Pyridoxine 5'-phosphate synthase.